Consider the following 774-residue polypeptide: Probable ubiquitin-like-specific protease 2A (774 aa).

Positions 118–141 (SSLSENDEVSTGEATNPASDPHEV) are disordered. Residues His-400, Asp-430, and Cys-485 contribute to the active site. A disordered region spans residues 548 to 568 (ILPANSKSEPPHCGVSNRNDQ).

The protein belongs to the peptidase C48 family.

In terms of biological role, protease that catalyzes two essential functions in the SUMO pathway: processing of full-length SUMOs to their mature forms and deconjugation of SUMO from targeted proteins. In Arabidopsis thaliana (Mouse-ear cress), this protein is Probable ubiquitin-like-specific protease 2A (ULP2A).